The following is a 461-amino-acid chain: Cytochrome P450 monooxygenase sol6 (461 aa).

A helical membrane pass occupies residues 7–27; it reads IGWLVLSCGLFVAYWVLLAIY. Residues Asn307 and Asn324 are each glycosylated (N-linked (GlcNAc...) asparagine). Cys444 contacts heme.

It belongs to the cytochrome P450 family. The cofactor is heme.

The protein localises to the membrane. The protein operates within phytotoxin biosynthesis. Cytochrome P450 monooxygenase; part of the gene cluster that mediates the biosynthesis of the phytotoxin solanapyrone, a causal agent of early blight disease of potato and tomato. The prosolanapyrone synthase sol1 is a polyketide synthase that produces the octaketide desmethylprosolanapyrone I via sequential condensations of 7 malonyl-CoA units with one acetyl-CoA unit, and one methylation step. The octaketide backbone is further methylated by the sol2 O-methyltransferase to yield prosolanapyrone I. Prosolanapyrone I is hydroxylated to prosolanapyrone II by the cytochrome P450 monooxygenase sol6. The solanapyrone synthase sol5 then catalyzes the oxidation of prosolanapyrone II and the subsequent Diels Alder cycloisomerization of the product prosolanapyrone III to solanapyrones A and D. Solanapyrones A and D are then converted into solanapyrones B and E, respectively, by the sol3 dehydrogenase. In Alternaria solani, this protein is Cytochrome P450 monooxygenase sol6 (sol6).